Consider the following 183-residue polypeptide: MNLEELKPSKLITFLYHPDELLRFKAAEVLGRKVKGEGARNFILRLFWHLSDESGAYCIGAPLGIAEIGRNNPEVFEGFKNKYVSLLDDWEVERKYVAYGIGRAAEIVRDAYPNPVEKLREKVEEIGDASFIAYAIFALKVLGDDVSDMIARFRKSEEIVEFYDGSEMVRTKLSDLLVEVAED.

This is an uncharacterized protein from Archaeoglobus fulgidus (strain ATCC 49558 / DSM 4304 / JCM 9628 / NBRC 100126 / VC-16).